The primary structure comprises 296 residues: uncharacterized protein (296 aa).

The first 20 residues, 1–20 (MRKFIFVLLTLLLVSPFSFA), serve as a signal peptide directing secretion.

This is an uncharacterized protein from Escherichia coli (strain K12).